Consider the following 374-residue polypeptide: S-adenosylmethionine:tRNA ribosyltransferase-isomerase (374 aa).

The protein belongs to the QueA family. In terms of assembly, monomer.

The protein localises to the cytoplasm. The enzyme catalyses 7-aminomethyl-7-carbaguanosine(34) in tRNA + S-adenosyl-L-methionine = epoxyqueuosine(34) in tRNA + adenine + L-methionine + 2 H(+). It participates in tRNA modification; tRNA-queuosine biosynthesis. Transfers and isomerizes the ribose moiety from AdoMet to the 7-aminomethyl group of 7-deazaguanine (preQ1-tRNA) to give epoxyqueuosine (oQ-tRNA). The polypeptide is S-adenosylmethionine:tRNA ribosyltransferase-isomerase (Prochlorococcus marinus (strain AS9601)).